Consider the following 236-residue polypeptide: Sugar fermentation stimulation protein homolog (236 aa).

Belongs to the SfsA family.

This Pseudomonas fluorescens (strain SBW25) protein is Sugar fermentation stimulation protein homolog.